The chain runs to 984 residues: G patch domain-containing protein TGH homolog (984 aa).

Residues 130–144 (EHARKQASKEQKERP) show a composition bias toward basic and acidic residues. Residues 130–153 (EHARKQASKEQKERPSAIPGPIPD) form a disordered region. One can recognise a G-patch domain in the interval 160–202 (TTSIGVKLLMKMGWRQGRSIRDAHADSLYESRREARKAFLALS). Residues 408-450 (LIEGCAAMVARCGKHIEDFYKEKSKTNTQFNFLNEGDGCSYYA) form an SURP motif repeat. 4 disordered regions span residues 464–503 (QKPD…SSFP), 679–717 (TRTN…ESSS), 775–806 (LGLD…GISR), and 820–984 (ESAL…HHKR). Positions 473 to 495 (SSDKLTAENRGKILGERPLDRST) are enriched in basic and acidic residues. Residues 679 to 695 (TRTNEVESSSIAPQHTS) are compositionally biased toward polar residues. A compositionally biased stretch (low complexity) spans 697 to 709 (AGATETEAKGAAT). The stretch at 814–859 (QEIKENESALDKEEIANASADVPSDNVEELGLKYEKQEHRAEKSRS) forms a coiled coil. Over residues 843–858 (LGLKYEKQEHRAEKSR) the composition is skewed to basic and acidic residues. Composition is skewed to basic residues over residues 882 to 892 (SRERRSRHKIR), 905 to 922 (HRSK…RRSR), and 934 to 946 (TKRK…HHRT). Residues 947 to 974 (RNPDTDSSDHEYEERHKSSSRRSSDKDR) are compositionally biased toward basic and acidic residues. Basic residues predominate over residues 975–984 (SRRRSRHHKR).

It localises to the nucleus. Its function is as follows. Functions as a component of microRNA (miRNA) and small interfering RNA (siRNA) biogenesis. May assist Dicer-like (DCL) proteins to efficiently process and/or recruit the precursors of miRNAs and siRNAs. The protein is G patch domain-containing protein TGH homolog of Oryza sativa subsp. japonica (Rice).